Consider the following 549-residue polypeptide: Chaperonin GroEL (549 aa).

ATP is bound by residues 30 to 33 (TLGP), K51, 87 to 91 (DGTTT), G415, and D496.

This sequence belongs to the chaperonin (HSP60) family. As to quaternary structure, forms a cylinder of 14 subunits composed of two heptameric rings stacked back-to-back. Interacts with the co-chaperonin GroES.

The protein resides in the cytoplasm. It carries out the reaction ATP + H2O + a folded polypeptide = ADP + phosphate + an unfolded polypeptide.. Functionally, together with its co-chaperonin GroES, plays an essential role in assisting protein folding. The GroEL-GroES system forms a nano-cage that allows encapsulation of the non-native substrate proteins and provides a physical environment optimized to promote and accelerate protein folding. This chain is Chaperonin GroEL, found in Prosthecochloris aestuarii (strain DSM 271 / SK 413).